The sequence spans 329 residues: Microtubule-associated protein RP/EB family member 1C (329 aa).

Positions Phe-13–Asp-115 constitute a Calponin-homology (CH) domain. Basic and acidic residues predominate over residues Arg-130 to Lys-141. The interval Arg-130–Ala-203 is disordered. Low complexity predominate over residues Ser-174–Gly-185. Residues Pro-193–Gly-263 form the EB1 C-terminal domain. Residues Lys-289 to Arg-311 are required for nuclear localization.

Belongs to the MAPRE family. In terms of assembly, homodimer. As to expression, highly expressed in the root and shoot meristems, in guard cells of leaf stomata, pollen grains and pollen tubes.

It localises to the nucleus. The protein localises to the cytoplasm. The protein resides in the cytoskeleton. It is found in the spindle. Its subcellular location is the phragmoplast. Its function is as follows. Plant-specific EB1 subtype that functions preferentially at early stages of plant mitosis by regulating spindle positioning and chromosome segregation. Accumulates in the prophase nucleus and is required to maintain spindle bipolarity during premetaphase and/or metaphase and for efficient segregation of chromosomes at anaphase. May play a role in the dynamics of microtubule network in elongating pollen tubes. This Arabidopsis thaliana (Mouse-ear cress) protein is Microtubule-associated protein RP/EB family member 1C (EB1C).